The primary structure comprises 219 residues: Tritrans,polycis-undecaprenyl-diphosphate synthase (geranylgeranyl-diphosphate specific) (219 aa).

Residue Asp12 is part of the active site. Asp12 is a Mg(2+) binding site. Substrate is bound by residues 13–16, Trp17, and 59–61; these read GNRR and SRD. The active-site Proton acceptor is the Asn62. Residues Arg66, Arg168, and 174-176 contribute to the substrate site; that span reads RLS. Position 187 (Glu187) interacts with Mg(2+).

Belongs to the UPP synthase family. As to quaternary structure, homodimer. The cofactor is Mg(2+).

It carries out the reaction geranylgeranyl diphosphate + 7 isopentenyl diphosphate = tri-trans,hepta-cis-undecaprenyl diphosphate + 7 diphosphate. In terms of biological role, catalyzes the sequential condensation of isopentenyl diphosphate (IPP) with geranylgeranyl diphosphate (GGPP) to yield (2Z,6Z,10Z,14Z,18Z,22Z,26Z,30E,34E,38E)-undecaprenyl diphosphate (tritrans,heptacis-UPP). It is probably the precursor of glycosyl carrier lipids. This chain is Tritrans,polycis-undecaprenyl-diphosphate synthase (geranylgeranyl-diphosphate specific), found in Aeropyrum pernix (strain ATCC 700893 / DSM 11879 / JCM 9820 / NBRC 100138 / K1).